Here is a 362-residue protein sequence, read N- to C-terminus: Adenosine deaminase (362 aa).

2 residues coordinate Zn(2+): His19 and His21. The substrate site is built by His21, Asp23, and Gly181. Position 208 (His208) interacts with Zn(2+). Residue Glu211 is the Proton donor of the active site. Asp300 is a binding site for Zn(2+).

This sequence belongs to the metallo-dependent hydrolases superfamily. Adenosine and AMP deaminases family. Adenosine deaminase subfamily. Zn(2+) is required as a cofactor.

The enzyme catalyses adenosine + H2O + H(+) = inosine + NH4(+). It catalyses the reaction 2'-deoxyadenosine + H2O + H(+) = 2'-deoxyinosine + NH4(+). In terms of biological role, catalyzes the hydrolytic deamination of adenosine and 2-deoxyadenosine. This Mycobacterium sp. (strain MCS) protein is Adenosine deaminase.